Consider the following 1071-residue polypeptide: MPKRTDLKSILIIGAGPIVIGQACEFDYSGAQACKALREEGYKVILVNSNPATIMTDPEMADVTYIEPIMWQTVEKIIAKERPDAILPTMGGQTALNCALDLARNGVLAKYNVELIGATEDAIDKAEDRGRFKEAMEKIGLSCPKSFVCHTMNEALAAQEQVGFPTLIRPSFTMGGSGGGIAYNKDEFLAICERGFDASPTHELLIEQSVLGWKEYEMEVVRDKNDNCIIICSIENFDPMGVHTGDSITVAPAQTLTDKEYQIMRNASLAVLREIGVDTGGSNVQFAVNPANGEMIVIEMNPRVSRSSALASKATGFPIAKVAAKLAVGFTLDELRNDITGGKTPASFEPSIDYVVTKIPRFAFEKFPAADDRLTTQMKSVGEVMAMGRTIQESFQKALRGLETGLCGFNPRSEDKAEIRRELANPGPERMLFVADAFRAGFTLEEIHEICAIDPWFLAQIEDLMKEEKAVSDGILSDLDFAALRRLKRKGFSDKRLAQLLNVSEKEVREHRYALKLHPVYKRVDTCAAEFATETAYLYSTYEEECESRPSDRKKVMILGGGPNRIGQGIEFDYCCVHAALALRESGFETIMVNCNPETVSTDFDTSDRLYFEPLTLEDVLEIVRTENPWGVIVHYGGQTPLKLANALVENGVNIIGTSADSIDAAEDRERFQKVLNDLGLRQPPNRIAHNEEEALVKAEEIGYPLVVRPSYVLGGRAMQVVHSAEELQKYMREAVQVSEDSPVLLDFFLNNAIEVDVDCVSDGKDVVIGGIMQHVEQAGIHSGDSGCSLPPYSLSEEIQDEIRRQTKAMAYALGVVGLMNVQFAVQDGVVFVLEVNPRASRTVPFVSKATGVPLAKVGARCMAGISLKEQGVEKEVVPDFYAVKEAVFPFIKFPGVDTILGPEMRSTGEVMGVGASFGEAYYKAQLGAGERLNPTGKIFLSVREEDKERVIKTAKNFQVLGYGICATRGTAQYLTEHGLIVQTINKVPEGRPHIGDALKNGEIALVVNTVSSDPQSVSDSHIIRQSALQQRVPQYTTTAGGEAMSEGAKSRDHLGVYSVQELHGRLKNRN.

Positions 1–403 (MPKRTDLKSI…SFQKALRGLE (403 aa)) are carboxyphosphate synthetic domain. Positions 129, 169, 175, 176, 208, 210, 215, 241, 242, 243, 285, and 299 each coordinate ATP. The ATP-grasp 1 domain maps to 133-328 (KEAMEKIGLS…IAKVAAKLAV (196 aa)). Mg(2+) contacts are provided by Gln-285, Glu-299, and Asn-301. Residues Gln-285, Glu-299, and Asn-301 each coordinate Mn(2+). The tract at residues 404-548 (TGLCGFNPRS…YSTYEEECES (145 aa)) is oligomerization domain. Positions 549–930 (RPSDRKKVMI…AYYKAQLGAG (382 aa)) are carbamoyl phosphate synthetic domain. The ATP-grasp 2 domain occupies 673-864 (QKVLNDLGLR…LAKVGARCMA (192 aa)). The ATP site is built by Arg-709, Phe-748, Leu-750, Glu-755, Gly-780, Ile-781, His-782, Ser-783, Gln-823, and Glu-835. Mg(2+) contacts are provided by Gln-823, Glu-835, and Asn-837. Positions 823, 835, and 837 each coordinate Mn(2+). Residues 931–1071 (ERLNPTGKIF…ELHGRLKNRN (141 aa)) enclose the MGS-like domain. Residues 931 to 1071 (ERLNPTGKIF…ELHGRLKNRN (141 aa)) form an allosteric domain region.

It belongs to the CarB family. In terms of assembly, composed of two chains; the small (or glutamine) chain promotes the hydrolysis of glutamine to ammonia, which is used by the large (or ammonia) chain to synthesize carbamoyl phosphate. Tetramer of heterodimers (alpha,beta)4. Mg(2+) is required as a cofactor. It depends on Mn(2+) as a cofactor.

The catalysed reaction is hydrogencarbonate + L-glutamine + 2 ATP + H2O = carbamoyl phosphate + L-glutamate + 2 ADP + phosphate + 2 H(+). The enzyme catalyses hydrogencarbonate + NH4(+) + 2 ATP = carbamoyl phosphate + 2 ADP + phosphate + 2 H(+). The protein operates within amino-acid biosynthesis; L-arginine biosynthesis; carbamoyl phosphate from bicarbonate: step 1/1. It participates in pyrimidine metabolism; UMP biosynthesis via de novo pathway; (S)-dihydroorotate from bicarbonate: step 1/3. Its function is as follows. Large subunit of the glutamine-dependent carbamoyl phosphate synthetase (CPSase). CPSase catalyzes the formation of carbamoyl phosphate from the ammonia moiety of glutamine, carbonate, and phosphate donated by ATP, constituting the first step of 2 biosynthetic pathways, one leading to arginine and/or urea and the other to pyrimidine nucleotides. The large subunit (synthetase) binds the substrates ammonia (free or transferred from glutamine from the small subunit), hydrogencarbonate and ATP and carries out an ATP-coupled ligase reaction, activating hydrogencarbonate by forming carboxy phosphate which reacts with ammonia to form carbamoyl phosphate. The sequence is that of Carbamoyl phosphate synthase large chain from Neisseria meningitidis serogroup B (strain ATCC BAA-335 / MC58).